Reading from the N-terminus, the 209-residue chain is Large ribosomal subunit protein uL3 (209 aa).

A disordered region spans residues 141-163; the sequence is RAVGSMGASSDPSRTFKNKRMPG.

The protein belongs to the universal ribosomal protein uL3 family. Part of the 50S ribosomal subunit. Forms a cluster with proteins L14 and L19.

Functionally, one of the primary rRNA binding proteins, it binds directly near the 3'-end of the 23S rRNA, where it nucleates assembly of the 50S subunit. The polypeptide is Large ribosomal subunit protein uL3 (Clostridium botulinum (strain Langeland / NCTC 10281 / Type F)).